The following is an 862-amino-acid chain: Rab GTPase-binding effector protein 1 (862 aa).

Alanine 2 bears the N-acetylalanine mark. Residues 11–328 (DVSLQQRVAE…KDQEEDEQQR (318 aa)) adopt a coiled-coil conformation. Residue lysine 282 is modified to N6-acetyllysine. Disordered stretches follow at residues 315–340 (ELKKKDQEEDEQQRINKGKDNKKIDT) and 355–374 (EESSTPLSNEEEHLDSTHGS). 3 positions are modified to phosphoserine: serine 374, serine 377, and serine 407. Position 408 is a phosphothreonine (threonine 408). Serine 410 bears the Phosphoserine mark. Residues 534–816 (DMCSNYEKQL…LQTELDVSEQ (283 aa)) adopt a coiled-coil conformation.

This sequence belongs to the rabaptin family. Heterodimer with RABGEF1. The heterodimer binds RAB4A and RAB5A that have been activated by GTP-binding. Interacts with TSC2. Interacts with GGA1 (via GAE domain), GGA2 (via GAE domain) and GGA3 (via GAE domain). Interacts with AP1G1 (via GAE domain). Interacts with AP1G2 (via GAE domain). Interacts with ECPAS. Interacts with KCNH1. Interacts with PKD1 (via C-terminal domain) and GGA1; the interactions recruit PKD1:PKD2 complex to GGA1 and ARL3 at trans-Golgi network. Interacts with KCNH1. In terms of processing, proteolytic cleavage by caspases in apoptotic cells causes loss of endosome fusion activity.

The protein localises to the cytoplasm. It is found in the early endosome. It localises to the recycling endosome. Its subcellular location is the cytoplasmic vesicle. Rab effector protein acting as linker between gamma-adaptin, RAB4A and RAB5A. Involved in endocytic membrane fusion and membrane trafficking of recycling endosomes. Involved in KCNH1 channels trafficking to and from the cell membrane. Stimulates RABGEF1 mediated nucleotide exchange on RAB5A. Mediates the traffic of PKD1:PKD2 complex from the endoplasmic reticulum through the Golgi to the cilium. This chain is Rab GTPase-binding effector protein 1 (Rabep1), found in Rattus norvegicus (Rat).